Reading from the N-terminus, the 343-residue chain is Thiamine thiazole synthase 4, chloroplastic (343 aa).

Residues Ala89, 109–110, Gly117, and Ala182 contribute to the substrate site; that span reads EQ. Cys211 carries the 2,3-didehydroalanine (Cys) modification. Substrate-binding positions include Asp213, His228, Met280, and 290 to 292; that span reads RMG.

It belongs to the THI4 family. In terms of assembly, homooctamer. It depends on Fe cation as a cofactor. During the catalytic reaction, a sulfide is transferred from Cys-211 to a reaction intermediate, generating a dehydroalanine residue.

The protein localises to the plastid. It is found in the chloroplast. The catalysed reaction is [ADP-thiazole synthase]-L-cysteine + glycine + NAD(+) = [ADP-thiazole synthase]-dehydroalanine + ADP-5-ethyl-4-methylthiazole-2-carboxylate + nicotinamide + 3 H2O + 2 H(+). Involved in biosynthesis of the thiamine precursor thiazole. Catalyzes the conversion of NAD and glycine to adenosine diphosphate 5-(2-hydroxyethyl)-4-methylthiazole-2-carboxylic acid (ADT), an adenylated thiazole intermediate. The reaction includes an iron-dependent sulfide transfer from a conserved cysteine residue of the protein to a thiazole intermediate. The enzyme can only undergo a single turnover, which suggests it is a suicide enzyme. May have additional roles in adaptation to various stress conditions and in DNA damage tolerance. The chain is Thiamine thiazole synthase 4, chloroplastic from Physcomitrium patens (Spreading-leaved earth moss).